We begin with the raw amino-acid sequence, 783 residues long: BMP/retinoic acid-inducible neural-specific protein 2 (783 aa).

The signal sequence occupies residues 1–33 (MRWPCSSWFRGLWPEAAPWAVLLALGVPGWVLA). An MACPF domain is found at 85-281 (RYRIYREFAR…FVAAALSYIT (197 aa)). 6 N-linked (GlcNAc...) asparagine glycosylation sites follow: Asn185, Asn354, Asn473, Asn579, Asn626, and Asn658.

The protein belongs to the BRINP family. In terms of tissue distribution, weakly expressed in embryonic stem (ES) cells. Strongly expressed in ES-derived neural stem cells (NSCs).

The protein localises to the secreted. Its function is as follows. Inhibits neuronal cell proliferation by negative regulation of the cell cycle transition. In Mus musculus (Mouse), this protein is BMP/retinoic acid-inducible neural-specific protein 2 (Brinp2).